Consider the following 255-residue polypeptide: Small ribosomal subunit protein uS2 (255 aa).

The tract at residues 226–255 (QGVSNEEVAAEQNIDLDEKEKSEETEATEE) is disordered.

The protein belongs to the universal ribosomal protein uS2 family.

This is Small ribosomal subunit protein uS2 from Staphylococcus aureus (strain Mu3 / ATCC 700698).